The primary structure comprises 243 residues: MATVSMRDMLKAGVHFGHQTRYWNPKMKPFIFGARNKVHIINLEKTVPMFNEALAELAKIGNKKGKVLFVGTKRAASEAVKEAAINSDQYYVNNRWLGGMLTNFKTVRQSIKRLKEYEVQAQDGTFEQITKKEALMRTRSMEKLEKSLGGIKNMNGLPDALFVIDADHEHIAVKEANNLGIPVFAVVDTNSNPDGVDYIIPGNDDAIRAIQLYLNAAADSVKSGRNQDVAAAVAEKDGFVEAE.

Belongs to the universal ribosomal protein uS2 family.

The protein is Small ribosomal subunit protein uS2 of Aliivibrio salmonicida (strain LFI1238) (Vibrio salmonicida (strain LFI1238)).